A 1989-amino-acid polypeptide reads, in one-letter code: Zinc finger C3H1 domain-containing protein (1989 aa).

4 disordered regions span residues 1–133 (MATA…RPSF), 148–218 (GRPY…SKNE), 251–290 (SSKEENVQEDPKTLNFEDQTSTDNVSITKDSSKEVAPEEK), and 310–365 (LPGD…LGED). An N-acetylalanine modification is found at Ala2. Ser15, Ser28, and Ser34 each carry phosphoserine. The span at 20-32 (GELEDGEISDDDN) shows a compositional bias: acidic residues. A compositionally biased stretch (low complexity) spans 33–44 (NSQIRSRSSSSS). Over residues 62–72 (RGGGSGGGGGS) the composition is skewed to gly residues. 3 stretches are compositionally biased toward low complexity: residues 114 to 132 (PPSVRMPSSSLSESSPRPS), 183 to 192 (GFSSSQSWRE), and 201 to 210 (KSFGRSPSRK). The residue at position 128 (Ser128) is a Phosphoserine. The stretch at 219–259 (NCVEETFEDLLLKYKQIQLELECINKDEKLALSSKEENVQE) forms a coiled coil. Ser251 is subject to Phosphoserine. Residues 251-262 (SSKEENVQEDPK) show a composition bias toward basic and acidic residues. A compositionally biased stretch (polar residues) spans 266–279 (FEDQTSTDNVSITK). The segment covering 280–290 (DSSKEVAPEEK) has biased composition (basic and acidic residues). Residues 330–340 (KSDTTDSSQGL) are compositionally biased toward polar residues. Residues Ser352 and Ser383 each carry the phosphoserine modification. Residues 358–389 (SEKKLGEDEEELSELQLRLLALQSASKKWQQK) are a coiled coil. Disordered stretches follow at residues 385 to 671 (KWQQ…SNLS) and 711 to 770 (LNDS…PEAL). Residues 392 to 402 (QVMKESKEKLT) show a composition bias toward basic and acidic residues. A compositionally biased stretch (basic residues) spans 430-440 (ALRKQQTKAWK). The stretch at 432–487 (RKQQTKAWKKLQQQKEQERQKEEDQRKQAEEEERRKREEEIRKIRDLSNQEEQYNR) forms a coiled coil. 2 stretches are compositionally biased toward basic and acidic residues: residues 444–479 (QQKEQERQKEEDQRKQAEEEERRKREEEIRKIRDLS) and 501–515 (KSSDPDLRRSLDKQP). Acidic residues predominate over residues 527 to 537 (NYEEVAMDTDS). Low complexity predominate over residues 574–583 (VSSLPPLSQP). The span at 594-616 (PLPPLPPLPPLPPEDPEQPPKPP) shows a compositional bias: pro residues. Positions 647–671 (TSSNSDPPSPPVLNNSHPVPRSNLS) are enriched in polar residues. Residues Ser662, Ser714, Ser717, and Ser719 each carry the phosphoserine modification. A compositionally biased stretch (basic and acidic residues) spans 755–770 (PKSEKENDPLRTPEAL). Position 766 is a phosphothreonine (Thr766). Phosphoserine is present on residues Ser805 and Ser809. The stretch at 847 to 909 (LKNLVQQEAK…QQRVTIKKAL (63 aa)) forms a coiled coil. 3 positions are modified to phosphoserine: Ser948, Ser949, and Ser953. Residues 965 to 989 (EKRRLQKLEYEYALKIQKLKEARAL) adopt a coiled-coil conformation. Phosphoserine occurs at positions 998 and 1046. The segment at 1185-1206 (FCRFDLTGTCNDDDCQWQHIQD) adopts a C3H1-type zinc-finger fold. A phosphoserine mark is found at Ser1301, Ser1303, and Ser1304. 7 TPR repeats span residues 1361-1400 (VQLWLKLAYKYLNQNEGECSESLDSALNVLARALENNKDN), 1401-1434 (PEIWCHYLRLFSKRGTKDEVQEMCETAVEYAPDY), 1438-1471 (WTFLHLESTFEEKDYVCERMLEFLMGAAKQETSN), 1478-1511 (LEALLFRVQLHIFTGRCQSALAILQNALKSANDG), 1602-1635 (LPLYTNMIALHQLLERYEAAMELCKSLLESCPIN), 1636-1669 (CQLLEALVALYLQTNQHDKARAVWLTAFEKNPQN), and 1745-1778 (PYLWLIYCLCHPLQSSIKETVEAYEAALGVAMRC).

In terms of assembly, component of the poly(A) tail exosome targeting (PAXT) complex made of accessory factors, such as PABPN1, ZFC3H1 and MTREX, and which directs a subset of long and polyadenylated poly(A) RNAs for exosomal degradation. Co-localizes with component of the CBC-ARS2 (CBCA) complex. Binds to RNA exosome components. Interacts with NCBP1/CBP80, ZC3H18, MTREX and PABPN1 in a RNase-insensitive manner, and with PABPC4, PABPC1 and ZC3H14 in a RNase-sensitive manner.

The protein resides in the nucleus. Functionally, subunit of the trimeric poly(A) tail exosome targeting (PAXT) complex, a complex that directs a subset of long and polyadenylated poly(A) RNAs for exosomal degradation. The RNA exosome is fundamental for the degradation of RNA in eukaryotic nuclei. Substrate targeting is facilitated by its cofactor MTREX, which links to RNA-binding protein adapters. The sequence is that of Zinc finger C3H1 domain-containing protein (ZFC3H1) from Homo sapiens (Human).